The following is a 914-amino-acid chain: Isoleucine--tRNA ligase (914 aa).

The 'HIGH' region motif lies at Pro57–His67. Residue Glu554 participates in L-isoleucyl-5'-AMP binding. The 'KMSKS' region motif lies at Lys595 to Ser599. Position 598 (Lys598) interacts with ATP. The Zn(2+) site is built by Cys883, Cys886, Cys904, and Cys907.

The protein belongs to the class-I aminoacyl-tRNA synthetase family. IleS type 1 subfamily. Monomer. Zn(2+) is required as a cofactor.

Its subcellular location is the cytoplasm. It catalyses the reaction tRNA(Ile) + L-isoleucine + ATP = L-isoleucyl-tRNA(Ile) + AMP + diphosphate. Catalyzes the attachment of isoleucine to tRNA(Ile). As IleRS can inadvertently accommodate and process structurally similar amino acids such as valine, to avoid such errors it has two additional distinct tRNA(Ile)-dependent editing activities. One activity is designated as 'pretransfer' editing and involves the hydrolysis of activated Val-AMP. The other activity is designated 'posttransfer' editing and involves deacylation of mischarged Val-tRNA(Ile). In Macrococcus caseolyticus (strain JCSC5402) (Macrococcoides caseolyticum), this protein is Isoleucine--tRNA ligase.